The primary structure comprises 487 residues: Beta-barrel assembly-enhancing protease (487 aa).

Positions 1–27 (MFRQLKKNLVATLIAAMTIGQVAPAFA) are cleaved as a signal peptide. Zn(2+) is bound at residue His136. Glu137 is a catalytic residue. The Zn(2+) site is built by His140 and Glu201. The active-site Proton donor is Asp205. TPR repeat units follow at residues 309–342 (RAAQYGRALQAMEANKYDEARKTLQPLLAAEPGN), 344–376 (WYLDLATDIDLGQNKANEAINRLKNARDLRTNP), 377–409 (VLQLNLANAYLQGGQPQEAANILNRYTFNNKDD), and 427–460 (DQELAARAEGYALAGRLDQAISLLSSASSQVKLG).

Belongs to the peptidase M48 family. BepA subfamily. Zn(2+) is required as a cofactor.

The protein localises to the periplasm. Functionally, functions both as a chaperone and a metalloprotease. Maintains the integrity of the outer membrane by promoting either the assembly or the elimination of outer membrane proteins, depending on their folding state. In Escherichia coli O157:H7, this protein is Beta-barrel assembly-enhancing protease.